The chain runs to 164 residues: Pheromone-binding protein 2 (164 aa).

An N-terminal signal peptide occupies residues 1 to 22 (MIRKVLLSVLLAVLMTINLGQA). 3 disulfide bridges follow: Cys-41-Cys-76, Cys-72-Cys-130, and Cys-119-Cys-139.

Belongs to the PBP/GOBP family. As to expression, antenna.

This major soluble protein in olfactory sensilla of male moths might serve to solubilize the extremely hydrophobic pheromone molecules and to transport pheromone through the aqueous lymph to receptors located on olfactory cilia. This Antheraea pernyi (Chinese oak silk moth) protein is Pheromone-binding protein 2.